Consider the following 275-residue polypeptide: Prohibitin-1 (275 aa).

The short motif at 106-109 (YQNL) is the AIM element.

The protein belongs to the prohibitin family. In terms of assembly, the mitochondrial prohibitin complex consists of two subunits (PHB1 and PHB2). The subunits assemble into a membrane-associated ring-shaped supercomplex of approximately 1 mDa. Interacts with ATG24/SNX4; the interaction is direct and plays a role in mitophagy.

The protein localises to the mitochondrion inner membrane. Its function is as follows. Prohibitin probably acts as a holdase/unfoldase for the stabilization of newly synthesized mitochondrial proteins. Involved in mitophagy. Required for the switch to necrotrophic growth. In Colletotrichum higginsianum (strain IMI 349063) (Crucifer anthracnose fungus), this protein is Prohibitin-1.